The sequence spans 150 residues: SsrA-binding protein (150 aa).

The protein belongs to the SmpB family.

Its subcellular location is the cytoplasm. Required for rescue of stalled ribosomes mediated by trans-translation. Binds to transfer-messenger RNA (tmRNA), required for stable association of tmRNA with ribosomes. tmRNA and SmpB together mimic tRNA shape, replacing the anticodon stem-loop with SmpB. tmRNA is encoded by the ssrA gene; the 2 termini fold to resemble tRNA(Ala) and it encodes a 'tag peptide', a short internal open reading frame. During trans-translation Ala-aminoacylated tmRNA acts like a tRNA, entering the A-site of stalled ribosomes, displacing the stalled mRNA. The ribosome then switches to translate the ORF on the tmRNA; the nascent peptide is terminated with the 'tag peptide' encoded by the tmRNA and targeted for degradation. The ribosome is freed to recommence translation, which seems to be the essential function of trans-translation. The chain is SsrA-binding protein from Chlamydia caviae (strain ATCC VR-813 / DSM 19441 / 03DC25 / GPIC) (Chlamydophila caviae).